The chain runs to 37 residues: Large ribosomal subunit protein bL36 (37 aa).

Belongs to the bacterial ribosomal protein bL36 family.

The protein is Large ribosomal subunit protein bL36 of Acidithiobacillus ferrooxidans (strain ATCC 23270 / DSM 14882 / CIP 104768 / NCIMB 8455) (Ferrobacillus ferrooxidans (strain ATCC 23270)).